A 497-amino-acid chain; its full sequence is UPF0371 protein cu0538 (497 aa).

The protein belongs to the UPF0371 family.

The protein is UPF0371 protein cu0538 of Corynebacterium urealyticum (strain ATCC 43042 / DSM 7109).